Consider the following 193-residue polypeptide: Recombination protein RecR (193 aa).

The C4-type zinc finger occupies 61 to 76; sequence CSSCNALSESEVCEIC. Positions 84–170 constitute a Toprim domain; it reads SQLCMVLHPR…TFTKIAQGVP (87 aa).

It belongs to the RecR family.

May play a role in DNA repair. It seems to be involved in an RecBC-independent recombinational process of DNA repair. It may act with RecF and RecO. In Helicobacter pylori (strain P12), this protein is Recombination protein RecR.